The primary structure comprises 509 residues: Aspartyl/glutamyl-tRNA(Asn/Gln) amidotransferase subunit B (509 aa).

Belongs to the GatB/GatE family. GatB subfamily. In terms of assembly, heterotrimer of A, B and C subunits.

The enzyme catalyses L-glutamyl-tRNA(Gln) + L-glutamine + ATP + H2O = L-glutaminyl-tRNA(Gln) + L-glutamate + ADP + phosphate + H(+). It carries out the reaction L-aspartyl-tRNA(Asn) + L-glutamine + ATP + H2O = L-asparaginyl-tRNA(Asn) + L-glutamate + ADP + phosphate + 2 H(+). Its function is as follows. Allows the formation of correctly charged Asn-tRNA(Asn) or Gln-tRNA(Gln) through the transamidation of misacylated Asp-tRNA(Asn) or Glu-tRNA(Gln) in organisms which lack either or both of asparaginyl-tRNA or glutaminyl-tRNA synthetases. The reaction takes place in the presence of glutamine and ATP through an activated phospho-Asp-tRNA(Asn) or phospho-Glu-tRNA(Gln). The protein is Aspartyl/glutamyl-tRNA(Asn/Gln) amidotransferase subunit B of Psychrobacter cryohalolentis (strain ATCC BAA-1226 / DSM 17306 / VKM B-2378 / K5).